The sequence spans 307 residues: MPSEHPFSDGIPTPNPKETMNDTAQITASYGRRYIVRTPDGTTYEASTRKKRVDFACGDRVRISPVNAEQVVIEDFLPRQSLLYRQDAWKTKLIAANVTQLLIVTAAVPSPSVRLLQRALLAAEAAGIEAVIVLNKADLPETALWREKLKFYETLGYPVIETRALENAGSLRPALQGHSNILLGQSGMGKSTLTNALLGSQTARTGDISAALDSGKHTTTHARLYDLNGETQLIDSPGLQEFGLHHLQAADLPRYFPDFRHLVGQCRFHNCTHRAEPGCAFKAAAQTGAASPERLAFLQGITDELPG.

Positions 1–21 (MPSEHPFSDGIPTPNPKETMN) are disordered. Residues 85 to 242 (RQDAWKTKLI…LIDSPGLQEF (158 aa)) enclose the CP-type G domain. Residues 135–138 (NKAD) and 184–192 (GQSGMGKST) each bind GTP. Cysteine 266, cysteine 271, histidine 273, and cysteine 279 together coordinate Zn(2+).

It belongs to the TRAFAC class YlqF/YawG GTPase family. RsgA subfamily. In terms of assembly, monomer. Associates with 30S ribosomal subunit, binds 16S rRNA. Requires Zn(2+) as cofactor.

The protein resides in the cytoplasm. Its function is as follows. One of several proteins that assist in the late maturation steps of the functional core of the 30S ribosomal subunit. Helps release RbfA from mature subunits. May play a role in the assembly of ribosomal proteins into the subunit. Circularly permuted GTPase that catalyzes slow GTP hydrolysis, GTPase activity is stimulated by the 30S ribosomal subunit. This Neisseria meningitidis serogroup B (strain ATCC BAA-335 / MC58) protein is Small ribosomal subunit biogenesis GTPase RsgA.